Here is a 389-residue protein sequence, read N- to C-terminus: Large envelope protein (389 aa).

Methionine 1 is modified (N-acetylmethionine). Glycine 2 carries N-myristoyl glycine; by host lipidation. The interval 2–108 (GTNLSVPNPL…PPLRDSHPQA (107 aa)) is pre-S1. The segment at 2–163 (GTNLSVPNPL…FSRTGDPAPN (162 aa)) is pre-S. The Virion surface; in external conformation portion of the chain corresponds to 2 to 170 (GTNLSVPNPL…APNMESTTSG (169 aa)). At 2-242 (GTNLSVPNPL…PGYRWMCLRR (241 aa)) the chain is on the intravirion; in internal conformation side. Residues 74-105 (LTTVPAAPPPASTNRQSGRQPTPISPPLRDSH) form a disordered region. Residues 85-95 (STNRQSGRQPT) are compositionally biased toward polar residues. Positions 109 to 163 (MQWNSTTFHQALLDPRVRGLYFPAGGSSSGTVNPVPTIVSPISSIFSRTGDPAPN) are pre-S2. The chain crosses the membrane as a helical span at residues 171–191 (FLGPLLVLQAGFFLLTRILTI). At 192 to 242 (PQSLDSWWTSLNFLGEAPTCPGQNSQSPTSNHSPTSCPPICPGYRWMCLRR) the chain is on the intravirion; in external conformation side. The chain crosses the membrane as a helical span at residues 243–263 (FIIFLFILLLCLIFLLVLLDY). Residues 264-337 (QGMLPVCPLL…WASVRFSWLS (74 aa)) are Virion surface-facing. An N-linked (GlcNAc...) asparagine; by host glycan is attached at asparagine 309. Residues 338–358 (LLVPFVQWFAGLSPTVWLSVI) traverse the membrane as a helical segment. Residues 359 to 364 (WMMWYW) lie on the Intravirion side of the membrane. Residues 365–387 (GPSLYNILSPFLPLLPIFFCLWV) form a helical membrane-spanning segment. The Virion surface segment spans residues 388–389 (YI).

This sequence belongs to the orthohepadnavirus major surface antigen family. In its internal form (Li-HBsAg), interacts with the capsid protein and with the isoform S. Interacts with host chaperone CANX. As to quaternary structure, associates with host chaperone CANX through its pre-S2 N glycan; this association may be essential for isoform M proper secretion. In terms of assembly, interacts with isoform L. Interacts with the antigens of satellite virus HDV (HDVAgs); this interaction is required for encapsidation of HDV genomic RNA. Isoform M is N-terminally acetylated by host at a ratio of 90%, and N-glycosylated by host at the pre-S2 region. In terms of processing, myristoylated.

The protein localises to the virion membrane. Its function is as follows. The large envelope protein exists in two topological conformations, one which is termed 'external' or Le-HBsAg and the other 'internal' or Li-HBsAg. In its external conformation the protein attaches the virus to cell receptors and thereby initiating infection. This interaction determines the species specificity and liver tropism. This attachment induces virion internalization predominantly through caveolin-mediated endocytosis. The large envelope protein also assures fusion between virion membrane and endosomal membrane. In its internal conformation the protein plays a role in virion morphogenesis and mediates the contact with the nucleocapsid like a matrix protein. In terms of biological role, the middle envelope protein plays an important role in the budding of the virion. It is involved in the induction of budding in a nucleocapsid independent way. In this process the majority of envelope proteins bud to form subviral lipoprotein particles of 22 nm of diameter that do not contain a nucleocapsid. The protein is Large envelope protein of Hepatitis B virus genotype C subtype adr (isolate Japan/A4/1994) (HBV-C).